Here is a 153-residue protein sequence, read N- to C-terminus: Aspartate carbamoyltransferase regulatory chain (153 aa).

Zn(2+)-binding residues include Cys109, Cys114, Cys138, and Cys141.

It belongs to the PyrI family. As to quaternary structure, contains catalytic and regulatory chains. Zn(2+) is required as a cofactor.

Involved in allosteric regulation of aspartate carbamoyltransferase. In Escherichia coli (strain ATCC 8739 / DSM 1576 / NBRC 3972 / NCIMB 8545 / WDCM 00012 / Crooks), this protein is Aspartate carbamoyltransferase regulatory chain.